A 129-amino-acid chain; its full sequence is D-ribose pyranase (129 aa).

Histidine 20 (proton donor) is an active-site residue. Residues aspartate 28, histidine 96, and 118–120 (YAN) each bind substrate.

Belongs to the RbsD / FucU family. RbsD subfamily. In terms of assembly, homodecamer.

Its subcellular location is the cytoplasm. The catalysed reaction is beta-D-ribopyranose = beta-D-ribofuranose. The protein operates within carbohydrate metabolism; D-ribose degradation; D-ribose 5-phosphate from beta-D-ribopyranose: step 1/2. Its function is as follows. Catalyzes the interconversion of beta-pyran and beta-furan forms of D-ribose. The sequence is that of D-ribose pyranase from Exiguobacterium sibiricum (strain DSM 17290 / CCUG 55495 / CIP 109462 / JCM 13490 / 255-15).